Reading from the N-terminus, the 389-residue chain is viridiflorene synthase Agr2 (389 aa).

Residues 1–15 form the signal peptide; that stretch reads MVWDFVLSLFHSLLA. The Mg(2+) site is built by Asp-128, Asn-263, Ser-267, and Glu-271. The DDXXD motif signature appears at 128–132; it reads DEVTD. (2E,6E)-farnesyl diphosphate-binding residues include Arg-360 and Tyr-361.

It belongs to the terpene synthase family. Requires Mg(2+) as cofactor.

It catalyses the reaction (2E,6E)-farnesyl diphosphate = viridiflorene + diphosphate. Its function is as follows. Terpene cyclase that catalyzes the cyclization of farnesyl diphosphate (FPP) to viridiflorene. The polypeptide is viridiflorene synthase Agr2 (Cyclocybe aegerita (Black poplar mushroom)).